Consider the following 416-residue polypeptide: Multifunctional CCA protein (416 aa).

ATP contacts are provided by glycine 8 and arginine 11. Residues glycine 8 and arginine 11 each coordinate CTP. The Mg(2+) site is built by glutamate 21 and aspartate 23. Arginine 91, arginine 137, and arginine 140 together coordinate ATP. The CTP site is built by arginine 91, arginine 137, and arginine 140. Residues 228–329 enclose the HD domain; sequence TGIHTLMVLK…LKLFDAVDAW (102 aa).

Belongs to the tRNA nucleotidyltransferase/poly(A) polymerase family. Bacterial CCA-adding enzyme type 1 subfamily. In terms of assembly, monomer. Can also form homodimers and oligomers. Mg(2+) is required as a cofactor. The cofactor is Ni(2+).

The enzyme catalyses a tRNA precursor + 2 CTP + ATP = a tRNA with a 3' CCA end + 3 diphosphate. It catalyses the reaction a tRNA with a 3' CCA end + 2 CTP + ATP = a tRNA with a 3' CCACCA end + 3 diphosphate. Functionally, catalyzes the addition and repair of the essential 3'-terminal CCA sequence in tRNAs without using a nucleic acid template. Adds these three nucleotides in the order of C, C, and A to the tRNA nucleotide-73, using CTP and ATP as substrates and producing inorganic pyrophosphate. tRNA 3'-terminal CCA addition is required both for tRNA processing and repair. Also involved in tRNA surveillance by mediating tandem CCA addition to generate a CCACCA at the 3' terminus of unstable tRNAs. While stable tRNAs receive only 3'-terminal CCA, unstable tRNAs are marked with CCACCA and rapidly degraded. This Photorhabdus laumondii subsp. laumondii (strain DSM 15139 / CIP 105565 / TT01) (Photorhabdus luminescens subsp. laumondii) protein is Multifunctional CCA protein.